Consider the following 335-residue polypeptide: Anthranilate phosphoribosyltransferase (335 aa).

Residues Gly79, Gly82 to Asp83, Ser87, Asn89 to Thr92, Lys107 to Ser115, and Ser119 contribute to the 5-phospho-alpha-D-ribose 1-diphosphate site. Gly79 contributes to the anthranilate binding site. Ser91 contacts Mg(2+). Position 110 (Asn110) interacts with anthranilate. An anthranilate-binding site is contributed by Arg165. Mg(2+)-binding residues include Asp224 and Glu225.

Belongs to the anthranilate phosphoribosyltransferase family. As to quaternary structure, homodimer. The cofactor is Mg(2+).

It catalyses the reaction N-(5-phospho-beta-D-ribosyl)anthranilate + diphosphate = 5-phospho-alpha-D-ribose 1-diphosphate + anthranilate. It participates in amino-acid biosynthesis; L-tryptophan biosynthesis; L-tryptophan from chorismate: step 2/5. Functionally, catalyzes the transfer of the phosphoribosyl group of 5-phosphorylribose-1-pyrophosphate (PRPP) to anthranilate to yield N-(5'-phosphoribosyl)-anthranilate (PRA). This Lactococcus lactis subsp. cremoris (strain MG1363) protein is Anthranilate phosphoribosyltransferase.